A 593-amino-acid polypeptide reads, in one-letter code: NADH-quinone oxidoreductase subunit C/D (593 aa).

Positions 1–184 (MTADSVLSIP…DPYSLSAAKQ (184 aa)) are NADH dehydrogenase I subunit C. The NADH dehydrogenase I subunit D stretch occupies residues 208–593 (DFMFLNLGPN…IDFVMADVDR (386 aa)).

The protein in the N-terminal section; belongs to the complex I 30 kDa subunit family. This sequence in the C-terminal section; belongs to the complex I 49 kDa subunit family. In terms of assembly, NDH-1 is composed of 13 different subunits. Subunits NuoB, CD, E, F, and G constitute the peripheral sector of the complex.

The protein localises to the cell inner membrane. It catalyses the reaction a quinone + NADH + 5 H(+)(in) = a quinol + NAD(+) + 4 H(+)(out). NDH-1 shuttles electrons from NADH, via FMN and iron-sulfur (Fe-S) centers, to quinones in the respiratory chain. The immediate electron acceptor for the enzyme in this species is believed to be ubiquinone. Couples the redox reaction to proton translocation (for every two electrons transferred, four hydrogen ions are translocated across the cytoplasmic membrane), and thus conserves the redox energy in a proton gradient. The polypeptide is NADH-quinone oxidoreductase subunit C/D (Azotobacter vinelandii (strain DJ / ATCC BAA-1303)).